The primary structure comprises 423 residues: MFTILTGSQFGDEGKGKIVDLLSKDYDLVVRFQGGDNAGHTVVVGDDVYKLHLIPSGFLLDSRVLIGPGTVLNPEVLAEEIDMLEKTGVEVSSDKLGIDAKTSIIMPYHVELDSLRESLRKEKIGTTKKGIGFAYVDKIARDEVRMSDLVDSEILMNRLTEMAASKEAAIRELGGDPSIVTDSELMDKYVKLGQRLAPYVTDVSYEINKAISEGKNVLAEGAQGTFLDVIHGTQKFVTSSSTIAGSACANLGVGPTKVDEVLGIVKAYITRVGEGPLPTELHDEAGAHLHDVGHEFGTTTGRSRRCGWFDLPLLKKAINLNGYTSVALTKLDVLSDLDVVKVCVAYDLNGERLDYPPEDTSLLSMCKPIYDELEGWSDDLTGVKRYEDIARAAHDYVEKLEGMMGVPIKYVSVGPGREQTFEK.

Residues 11-17 (GDEGKGK) and 39-41 (GHT) contribute to the GTP site. Residue Asp-12 is the Proton acceptor of the active site. Mg(2+) is bound by residues Asp-12 and Gly-39. Residues 12–15 (DEGK), 37–40 (NAGH), Thr-127, Arg-141, Gln-223, Thr-238, and Arg-302 each bind IMP. The Proton donor role is filled by His-40. 298 to 304 (TTTGRSR) contacts substrate. Residues Arg-304, 330-332 (KLD), and 412-414 (SVG) contribute to the GTP site.

Belongs to the adenylosuccinate synthetase family. Homodimer. It depends on Mg(2+) as a cofactor.

It is found in the cytoplasm. The enzyme catalyses IMP + L-aspartate + GTP = N(6)-(1,2-dicarboxyethyl)-AMP + GDP + phosphate + 2 H(+). Its pathway is purine metabolism; AMP biosynthesis via de novo pathway; AMP from IMP: step 1/2. Its function is as follows. Plays an important role in the de novo pathway of purine nucleotide biosynthesis. Catalyzes the first committed step in the biosynthesis of AMP from IMP. The sequence is that of Adenylosuccinate synthetase from Methanococcoides burtonii (strain DSM 6242 / NBRC 107633 / OCM 468 / ACE-M).